Consider the following 590-residue polypeptide: Proline--tRNA ligase (590 aa).

This sequence belongs to the class-II aminoacyl-tRNA synthetase family. ProS type 1 subfamily. Homodimer.

It localises to the cytoplasm. The enzyme catalyses tRNA(Pro) + L-proline + ATP = L-prolyl-tRNA(Pro) + AMP + diphosphate. In terms of biological role, catalyzes the attachment of proline to tRNA(Pro) in a two-step reaction: proline is first activated by ATP to form Pro-AMP and then transferred to the acceptor end of tRNA(Pro). As ProRS can inadvertently accommodate and process non-cognate amino acids such as alanine and cysteine, to avoid such errors it has two additional distinct editing activities against alanine. One activity is designated as 'pretransfer' editing and involves the tRNA(Pro)-independent hydrolysis of activated Ala-AMP. The other activity is designated 'posttransfer' editing and involves deacylation of mischarged Ala-tRNA(Pro). The misacylated Cys-tRNA(Pro) is not edited by ProRS. This Leifsonia xyli subsp. xyli (strain CTCB07) protein is Proline--tRNA ligase.